We begin with the raw amino-acid sequence, 409 residues long: Tryptophan synthase beta chain (409 aa).

An N6-(pyridoxal phosphate)lysine modification is found at Lys92.

The protein belongs to the TrpB family. As to quaternary structure, tetramer of two alpha and two beta chains. Pyridoxal 5'-phosphate is required as a cofactor.

The enzyme catalyses (1S,2R)-1-C-(indol-3-yl)glycerol 3-phosphate + L-serine = D-glyceraldehyde 3-phosphate + L-tryptophan + H2O. It functions in the pathway amino-acid biosynthesis; L-tryptophan biosynthesis; L-tryptophan from chorismate: step 5/5. Its function is as follows. The beta subunit is responsible for the synthesis of L-tryptophan from indole and L-serine. The polypeptide is Tryptophan synthase beta chain (trpB) (Methanococcus voltae).